The primary structure comprises 412 residues: FAD-dependent monooxygenase nscC (412 aa).

The signal sequence occupies residues 1–21; that stretch reads MGKQQETILIIGAGIAGLTTS. Residues Glu-35 and Ala-46 each coordinate FAD. Asn-92 is a glycosylation site (N-linked (GlcNAc...) asparagine). An FAD-binding site is contributed by Arg-119. 2 N-linked (GlcNAc...) asparagine glycosylation sites follow: Asn-170 and Asn-231. 2 residues coordinate FAD: Asp-326 and Gly-339.

This sequence belongs to the paxM FAD-dependent monooxygenase family. Requires FAD as cofactor.

Its pathway is secondary metabolite biosynthesis. FAD-dependent monooxygenase; part of the gene cluster that mediates the biosynthesis of neosartoricin B, a prenylated anthracenone that probably exhibits T-cell antiproliferative activity, suggestive of a physiological role as an immunosuppressive agent. The non-reducing polyketide synthase nscA probably synthesizes and cyclizes the decaketide backbone. The hydrolase nscB then mediates the product release through hydrolysis followed by spontaneous decarboxylation. The prenyltransferase nscD catalyzes the addition of the dimethylallyl group to the aromatic C5. The FAD-dependent monooxygenase nscC is then responsible for the stereospecific hydroxylation at C2. Neosartoricin B can be converted into two additional compounds neosartoricins C and D. Neosartoricin C is a spirocyclic compound that is cyclized through the attack of C3 hydroxyl on C14, followed by dehydration. On the other hand, neosartoricin D is a further cyclized compound in which attack of C2 on C14 in neosartoricin C results in the formation of the acetal-containing dioxabicyclo-octanone ring. Both of these compounds are novel and possibly represent related metabolites of the gene cluster. In Arthroderma benhamiae (strain ATCC MYA-4681 / CBS 112371) (Trichophyton mentagrophytes), this protein is FAD-dependent monooxygenase nscC.